Here is a 338-residue protein sequence, read N- to C-terminus: Ketol-acid reductoisomerase (NADP(+)) (338 aa).

The region spanning 1–181 is the KARI N-terminal Rossmann domain; sequence MKVFYDKDAD…GGGRAGIIET (181 aa). NADP(+) contacts are provided by residues 24–27, Arg47, and Ser52; that span reads YGSQ. Residue His107 is part of the active site. Gly133 provides a ligand contact to NADP(+). Residues 182–327 enclose the KARI C-terminal knotted domain; that stretch reads NFREETETDL…EKLRAMMPWI (146 aa). Residues Asp190, Glu194, Glu226, and Glu230 each contribute to the Mg(2+) site. Ser251 is a substrate binding site.

This sequence belongs to the ketol-acid reductoisomerase family. It depends on Mg(2+) as a cofactor.

The enzyme catalyses (2R)-2,3-dihydroxy-3-methylbutanoate + NADP(+) = (2S)-2-acetolactate + NADPH + H(+). The catalysed reaction is (2R,3R)-2,3-dihydroxy-3-methylpentanoate + NADP(+) = (S)-2-ethyl-2-hydroxy-3-oxobutanoate + NADPH + H(+). Its pathway is amino-acid biosynthesis; L-isoleucine biosynthesis; L-isoleucine from 2-oxobutanoate: step 2/4. It functions in the pathway amino-acid biosynthesis; L-valine biosynthesis; L-valine from pyruvate: step 2/4. Involved in the biosynthesis of branched-chain amino acids (BCAA). Catalyzes an alkyl-migration followed by a ketol-acid reduction of (S)-2-acetolactate (S2AL) to yield (R)-2,3-dihydroxy-isovalerate. In the isomerase reaction, S2AL is rearranged via a Mg-dependent methyl migration to produce 3-hydroxy-3-methyl-2-ketobutyrate (HMKB). In the reductase reaction, this 2-ketoacid undergoes a metal-dependent reduction by NADPH to yield (R)-2,3-dihydroxy-isovalerate. The sequence is that of Ketol-acid reductoisomerase (NADP(+)) from Cupriavidus pinatubonensis (strain JMP 134 / LMG 1197) (Cupriavidus necator (strain JMP 134)).